A 432-amino-acid polypeptide reads, in one-letter code: Ribosomal protein uS12 methylthiotransferase RimO (432 aa).

The region spanning Met-1–Lys-112 is the MTTase N-terminal domain. Positions 10, 46, 75, 134, 138, and 141 each coordinate [4Fe-4S] cluster. The Radical SAM core domain maps to Ser-120–Lys-350. The 70-residue stretch at Glu-353–Glu-422 folds into the TRAM domain.

Belongs to the methylthiotransferase family. RimO subfamily. [4Fe-4S] cluster serves as cofactor.

The protein localises to the cytoplasm. It catalyses the reaction L-aspartate(89)-[ribosomal protein uS12]-hydrogen + (sulfur carrier)-SH + AH2 + 2 S-adenosyl-L-methionine = 3-methylsulfanyl-L-aspartate(89)-[ribosomal protein uS12]-hydrogen + (sulfur carrier)-H + 5'-deoxyadenosine + L-methionine + A + S-adenosyl-L-homocysteine + 2 H(+). Catalyzes the methylthiolation of an aspartic acid residue of ribosomal protein uS12. This is Ribosomal protein uS12 methylthiotransferase RimO from Aquifex aeolicus (strain VF5).